Reading from the N-terminus, the 195-residue chain is Peroxiredoxin (195 aa).

The Thioredoxin domain maps to 4-162 (AMIGKPAPEF…TLRLVQAFQF (159 aa)). Cysteine 49 serves as the catalytic Cysteine sulfenic acid (-SOH) intermediate.

This sequence belongs to the peroxiredoxin family. AhpC/Prx1 subfamily. As to quaternary structure, homodimer; disulfide-linked, upon oxidation.

It carries out the reaction a hydroperoxide + [thioredoxin]-dithiol = an alcohol + [thioredoxin]-disulfide + H2O. Functionally, thiol-specific peroxidase that catalyzes the reduction of hydrogen peroxide and organic hydroperoxides to water and alcohols, respectively. Plays a role in cell protection against oxidative stress by detoxifying peroxides and as sensor of hydrogen peroxide-mediated signaling events. The chain is Peroxiredoxin from Ascaris suum (Pig roundworm).